We begin with the raw amino-acid sequence, 535 residues long: Sucrose transport protein SUT5 (535 aa).

The Cytoplasmic portion of the chain corresponds to 1–53 (MEEGRRGDREGKSAAGWTALSTTKTTLEEKRRLQANGSVGGDAGTSGFRRIVR). A helical membrane pass occupies residues 54-74 (LFFACMVAGGIQYGWALQLSL). Topologically, residues 75–87 (LSPYSQTLGISHS) are extracellular. Residues 88–108 (YVSLTWICGPIAGFVVQPIVG) traverse the membrane as a helical segment. Residues 109–122 (YYSDRCTMKMGRRR) lie on the Cytoplasmic side of the membrane. The chain crosses the membrane as a helical span at residues 123-143 (PFILVGCLIICISVMIIGFSA). Residues 144-163 (DIGRHLGDTKEHCSTYTGPR) are Extracellular-facing. Residues 164 to 184 (WSAAMVYIVGFWFLDFANNTV) traverse the membrane as a helical segment. Over 185–203 (QGPARAMMADLSAGHHGPN) the chain is Cytoplasmic. The helical transmembrane segment at 204–224 (VGQSIFSLWMAIGSVLGYLSG) threads the bilayer. The Extracellular segment spans residues 225–249 (ANGKWHEWFPWLKTAACCDACANLK). A helical transmembrane segment spans residues 250–270 (GAFFTAVLLIVVSMTVTMYLA). At 271–302 (DEMPLDKQDVDTSGGGGCAVFVDLFKSLRNLP) the chain is on the cytoplasmic side. A helical transmembrane segment spans residues 303 to 323 (PAMFKVLAVTAVTWLSWFPFI). Residues 324 to 354 (QYNTDWMGREIYHGEPQGTAAKADVYDAGVR) are Extracellular-facing. Residues 355–375 (EGAMGLLFCSVALGVTSFVIP) traverse the membrane as a helical segment. Residues 376–384 (KLCRRLTSK) lie on the Cytoplasmic side of the membrane. Residues 385–405 (VVWSISNFLVFALMAVMVAVG) traverse the membrane as a helical segment. The Extracellular segment spans residues 406–429 (MVSMRGYRPSLAAGLTGPDPTLKA). Residues 430-450 (VALVVFALIGIPQAVLFSVPW) form a helical membrane-spanning segment. Over 451 to 465 (AVASEVTAEEGGGQG) the chain is Cytoplasmic. A helical transmembrane segment spans residues 466 to 486 (LAIGVLNIAIVVPQLVIALTA). Over 487-498 (GPIDGAFNKGNT) the chain is Extracellular. Residues 499-519 (PAFGIGGAFAFICGVLALIWL) form a helical membrane-spanning segment. At 520 to 535 (PKTRGVSNAAVVAGGH) the chain is on the cytoplasmic side.

The protein belongs to the glycoside-pentoside-hexuronide (GPH) cation symporter transporter (TC 2.A.2.4) family. As to quaternary structure, homodimer. Widely expressed. Highest expression in sink leaves and lowest in germinating seeds.

Its subcellular location is the cell membrane. It participates in glycan biosynthesis; sucrose metabolism. Its function is as follows. Responsible for the transport of sucrose into the cell, with the concomitant uptake of protons (symport system). Can also transport other glucosides such as maltose, arbutin, salicin, helicin, alpha-phenylglucoside and beta-phenylglucoside. This Oryza sativa subsp. japonica (Rice) protein is Sucrose transport protein SUT5 (SUT5).